We begin with the raw amino-acid sequence, 199 residues long: Large ribosomal subunit protein uL5 (199 aa).

Belongs to the universal ribosomal protein uL5 family. In terms of assembly, part of the 50S ribosomal subunit; part of the 5S rRNA/L5/L18/L25 subcomplex. Contacts the 5S rRNA and the P site tRNA. Forms a bridge to the 30S subunit in the 70S ribosome.

In terms of biological role, this is one of the proteins that bind and probably mediate the attachment of the 5S RNA into the large ribosomal subunit, where it forms part of the central protuberance. In the 70S ribosome it contacts protein S13 of the 30S subunit (bridge B1b), connecting the 2 subunits; this bridge is implicated in subunit movement. Contacts the P site tRNA; the 5S rRNA and some of its associated proteins might help stabilize positioning of ribosome-bound tRNAs. In Frankia casuarinae (strain DSM 45818 / CECT 9043 / HFP020203 / CcI3), this protein is Large ribosomal subunit protein uL5.